A 235-amino-acid chain; its full sequence is Triosephosphate isomerase (235 aa).

7-9 (NFK) is a binding site for substrate. The active-site Electrophile is His-92. The Proton acceptor role is filled by Glu-161. Substrate-binding residues include Gly-167 and Ser-197.

The protein belongs to the triosephosphate isomerase family. Homodimer.

The protein localises to the cytoplasm. The catalysed reaction is D-glyceraldehyde 3-phosphate = dihydroxyacetone phosphate. It participates in carbohydrate biosynthesis; gluconeogenesis. The protein operates within carbohydrate degradation; glycolysis; D-glyceraldehyde 3-phosphate from glycerone phosphate: step 1/1. Involved in the gluconeogenesis. Catalyzes stereospecifically the conversion of dihydroxyacetone phosphate (DHAP) to D-glyceraldehyde-3-phosphate (G3P). This chain is Triosephosphate isomerase, found in Helicobacter hepaticus (strain ATCC 51449 / 3B1).